A 620-amino-acid polypeptide reads, in one-letter code: 1-deoxy-D-xylulose-5-phosphate synthase (620 aa).

Thiamine diphosphate is bound by residues H80 and 121-123; that span reads GHS. Residue D152 coordinates Mg(2+). Residues 153 to 154, N181, Y288, and E370 each bind thiamine diphosphate; that span reads GA. N181 contacts Mg(2+).

This sequence belongs to the transketolase family. DXPS subfamily. In terms of assembly, homodimer. It depends on Mg(2+) as a cofactor. Thiamine diphosphate is required as a cofactor.

It carries out the reaction D-glyceraldehyde 3-phosphate + pyruvate + H(+) = 1-deoxy-D-xylulose 5-phosphate + CO2. It functions in the pathway metabolic intermediate biosynthesis; 1-deoxy-D-xylulose 5-phosphate biosynthesis; 1-deoxy-D-xylulose 5-phosphate from D-glyceraldehyde 3-phosphate and pyruvate: step 1/1. In terms of biological role, catalyzes the acyloin condensation reaction between C atoms 2 and 3 of pyruvate and glyceraldehyde 3-phosphate to yield 1-deoxy-D-xylulose-5-phosphate (DXP). This is 1-deoxy-D-xylulose-5-phosphate synthase from Shigella sonnei (strain Ss046).